The sequence spans 804 residues: Elongation factor G, mitochondrial (804 aa).

Residues M1–R63 constitute a mitochondrion transit peptide. The tr-type G domain maps to R99–A385. GTP contacts are provided by residues A108 to T115, D183 to H187, and N237 to D240.

Belongs to the TRAFAC class translation factor GTPase superfamily. Classic translation factor GTPase family. EF-G/EF-2 subfamily.

It localises to the mitochondrion. It participates in protein biosynthesis; polypeptide chain elongation. Mitochondrial GTPase that catalyzes the GTP-dependent ribosomal translocation step during translation elongation. During this step, the ribosome changes from the pre-translocational (PRE) to the post-translocational (POST) state as the newly formed A-site-bound peptidyl-tRNA and P-site-bound deacylated tRNA move to the P and E sites, respectively. Catalyzes the coordinated movement of the two tRNA molecules, the mRNA and conformational changes in the ribosome. The polypeptide is Elongation factor G, mitochondrial (mef1) (Sclerotinia sclerotiorum (strain ATCC 18683 / 1980 / Ss-1) (White mold)).